The primary structure comprises 180 residues: Large ribosomal subunit protein mL41 (180 aa).

The N-terminal 21 residues, 1-21, are a transit peptide targeting the mitochondrion; the sequence is MKLVLVSTRGVRSLNSTNFPA.

The protein belongs to the mitochondrion-specific ribosomal protein mL41 family. Component of the mitochondrial ribosome large subunit (39S) which comprises a 16S rRNA and about 50 distinct proteins.

Its subcellular location is the mitochondrion. The sequence is that of Large ribosomal subunit protein mL41 (mrpl-41) from Caenorhabditis elegans.